Consider the following 616-residue polypeptide: Chaperone protein HscA homolog (616 aa).

This sequence belongs to the heat shock protein 70 family.

Functionally, chaperone involved in the maturation of iron-sulfur cluster-containing proteins. Has a low intrinsic ATPase activity which is markedly stimulated by HscB. The chain is Chaperone protein HscA homolog from Vibrio cholerae serotype O1 (strain M66-2).